The primary structure comprises 158 residues: SsrA-binding protein (158 aa).

It belongs to the SmpB family.

Its subcellular location is the cytoplasm. Its function is as follows. Required for rescue of stalled ribosomes mediated by trans-translation. Binds to transfer-messenger RNA (tmRNA), required for stable association of tmRNA with ribosomes. tmRNA and SmpB together mimic tRNA shape, replacing the anticodon stem-loop with SmpB. tmRNA is encoded by the ssrA gene; the 2 termini fold to resemble tRNA(Ala) and it encodes a 'tag peptide', a short internal open reading frame. During trans-translation Ala-aminoacylated tmRNA acts like a tRNA, entering the A-site of stalled ribosomes, displacing the stalled mRNA. The ribosome then switches to translate the ORF on the tmRNA; the nascent peptide is terminated with the 'tag peptide' encoded by the tmRNA and targeted for degradation. The ribosome is freed to recommence translation, which seems to be the essential function of trans-translation. This is SsrA-binding protein from Bartonella tribocorum (strain CIP 105476 / IBS 506).